Consider the following 220-residue polypeptide: Ribosome maturation factor RimP (220 aa).

A disordered region spans residues 173–220 (KKDKEERRQRKKARRRGEKGGVGDDGTAGEEQPDSAREGPARSASEGE).

This sequence belongs to the RimP family.

Its subcellular location is the cytoplasm. Required for maturation of 30S ribosomal subunits. The sequence is that of Ribosome maturation factor RimP from Chelativorans sp. (strain BNC1).